The chain runs to 59 residues: uncharacterized protein (59 aa).

Residues 7-27 (LLLLVAIALISAFALTVTGVV) form a helical membrane-spanning segment.

It localises to the membrane. This is an uncharacterized protein from Pyrobaculum aerophilum (strain ATCC 51768 / DSM 7523 / JCM 9630 / CIP 104966 / NBRC 100827 / IM2).